Here is a 469-residue protein sequence, read N- to C-terminus: uncharacterized protein (469 aa).

A coiled-coil region spans residues 11–65 (LFISVAFSQESVEDLKRLLEEYKKKIQEIERRLEELEKAKKEEEKKKEAVALKPT).

This is an uncharacterized protein from Aquifex aeolicus (strain VF5).